The chain runs to 163 residues: Transcriptional repressor NrdR (163 aa).

The segment at 3 to 34 is a zinc-finger region; sequence CPKCNYLKSSVVDSRQAEEGNTIRRRRECENC. The region spanning 49–139 is the ATP-cone domain; sequence LLVVKKDGTR…VYRSFKDVDE (91 aa).

This sequence belongs to the NrdR family. It depends on Zn(2+) as a cofactor.

In terms of biological role, negatively regulates transcription of bacterial ribonucleotide reductase nrd genes and operons by binding to NrdR-boxes. The polypeptide is Transcriptional repressor NrdR (Streptococcus mutans serotype c (strain ATCC 700610 / UA159)).